Consider the following 256-residue polypeptide: Major prion protein 2 (256 aa).

The signal sequence occupies residues 1-24 (MVKSHIGSWILVLFVAMWSDVALC). The tract at residues 25–233 (KKRPKPGGGW…ESEAYYQRGA (209 aa)) is interaction with GRB2, ERI3 and SYN1. The segment at 28-110 (PKPGGGWNTG…QWNKPSKPKT (83 aa)) is disordered. Repeat copies occupy residues 54 to 62 (PQEGGDWGQ), 63 to 70 (PHGGGWGQ), 71 to 78 (PHVGGWGQ), 79 to 86 (PHGGGWGQ), and 87 to 95 (PHGGGGWGQ). The 5 X 8 AA tandem repeats of P-H-G-G-G-W-G-Q stretch occupies residues 54–95 (PQEGGDWGQPHGGGWGQPHVGGWGQPHGGGWGQPHGGGGWGQ). Over residues 58-99 (GDWGQPHGGGWGQPHVGGWGQPHGGGWGQPHGGGGWGQGGTH) the composition is skewed to gly residues. Residues histidine 64, glycine 65, glycine 66, histidine 72, glycine 74, histidine 80, glycine 81, glycine 82, histidine 88, glycine 90, and glycine 91 each coordinate Cu(2+). The cysteines at positions 182 and 217 are disulfide-linked. N-linked (GlcNAc...) asparagine glycans are attached at residues asparagine 184 and asparagine 200. Alanine 233 is lipidated: GPI-anchor amidated alanine. Residues 234 to 256 (SVILFSSPPVILLISFLIFLIVG) constitute a propeptide, removed in mature form.

Belongs to the prion family. Monomer and homodimer. Has a tendency to aggregate into amyloid fibrils containing a cross-beta spine, formed by a steric zipper of superposed beta-strands. Soluble oligomers may represent an intermediate stage on the path to fibril formation. Copper binding may promote oligomerization. Interacts with GRB2, APP, ERI3/PRNPIP and SYN1. Mislocalized cytosolically exposed PrP interacts with MGRN1; this interaction alters MGRN1 subcellular location and causes lysosomal enlargement. Interacts with KIAA1191.

It localises to the cell membrane. It is found in the golgi apparatus. Its function is as follows. Its primary physiological function is unclear. Has cytoprotective activity against internal or environmental stresses. May play a role in neuronal development and synaptic plasticity. May be required for neuronal myelin sheath maintenance. May play a role in iron uptake and iron homeostasis. Soluble oligomers are toxic to cultured neuroblastoma cells and induce apoptosis (in vitro). Association with GPC1 (via its heparan sulfate chains) targets PRNP to lipid rafts. Also provides Cu(2+) or Zn(2+) for the ascorbate-mediated GPC1 deaminase degradation of its heparan sulfate side chains. This is Major prion protein 2 from Tragelaphus strepsiceros (Greater kudu).